The sequence spans 258 residues: MLASQAGSNFSAAASSNGGQQQQQRRQHPIRPLTIKQMLEAQSVGGGVMVVDGREVTQATVVGRVVGYENANMASGGGAITAKHFGYRITDNTGMIVVRQWIDADRAQEPIPLNTHVRASGTVNVWQQSPIVTGTVVSMADSNEMNYHMLDAILTHLRLTQGNKRAAGNIGSGASVQNSAAAVGVQNMLPGGDNKVLLTDLLVSFIKQNGHGDAGMSMDELTMAAQRYSFTPGDVRTAMRTLAAEGKVYQTHDNRFNI.

Over residues 1 to 24 (MLASQAGSNFSAAASSNGGQQQQQ) the composition is skewed to low complexity. The tract at residues 1–28 (MLASQAGSNFSAAASSNGGQQQQQRRQH) is disordered. Positions 60-138 (TVVGRVVGYE…SPIVTGTVVS (79 aa)) form a DNA-binding region, OB.

Belongs to the replication factor A protein 2 family. In terms of assembly, heterotrimer of 51, 28, and 14 kDa chains. In terms of processing, phosphorylated in a cell-cycle-dependent manner (from the S phase until mitosis). Phosphorylated upon DNA damage, which promotes its translocation to nuclear foci.

The protein resides in the nucleus. It localises to the PML body. Functionally, as part of the heterotrimeric replication protein A complex (RPA/RP-A), binds and stabilizes single-stranded DNA intermediates, that form during DNA replication or upon DNA stress. It prevents their reannealing and in parallel, recruits and activates different proteins and complexes involved in DNA metabolism. Thereby, it plays an essential role both in DNA replication and the cellular response to DNA damage. The sequence is that of Replication protein A 28 kDa subunit (RPA2) from Crithidia fasciculata.